The chain runs to 443 residues: Phosphoglucosamine mutase (443 aa).

Serine 101 functions as the Phosphoserine intermediate in the catalytic mechanism. Residues serine 101, aspartate 239, aspartate 241, and aspartate 243 each coordinate Mg(2+). Serine 101 is modified (phosphoserine).

This sequence belongs to the phosphohexose mutase family. The cofactor is Mg(2+). Activated by phosphorylation.

It carries out the reaction alpha-D-glucosamine 1-phosphate = D-glucosamine 6-phosphate. Its function is as follows. Catalyzes the conversion of glucosamine-6-phosphate to glucosamine-1-phosphate. The polypeptide is Phosphoglucosamine mutase (Francisella tularensis subsp. tularensis (strain WY96-3418)).